Consider the following 228-residue polypeptide: tRNA (guanine-N(1)-)-methyltransferase (228 aa).

S-adenosyl-L-methionine is bound by residues Gly-111 and 131–136; that span reads IGDFIL.

This sequence belongs to the RNA methyltransferase TrmD family. In terms of assembly, homodimer.

The protein resides in the cytoplasm. It catalyses the reaction guanosine(37) in tRNA + S-adenosyl-L-methionine = N(1)-methylguanosine(37) in tRNA + S-adenosyl-L-homocysteine + H(+). Its function is as follows. Specifically methylates guanosine-37 in various tRNAs. The polypeptide is tRNA (guanine-N(1)-)-methyltransferase (Pelagibacter ubique (strain HTCC1062)).